We begin with the raw amino-acid sequence, 108 residues long: NADH dehydrogenase [ubiquinone] flavoprotein 3, mitochondrial (108 aa).

Residues 1 to 34 constitute a mitochondrion transit peptide; that stretch reads MAAPCLLRQGRAGALKTMLQEAQVFRGLASTVSL. Residues 33–72 form a disordered region; that stretch reads SLSAESGKSEKGQPQNSKKQSPPKKPAPVPAEPFDNTTYK. Ser105 is subject to Phosphoserine.

This sequence belongs to the complex I NDUFV3 subunit family. As to quaternary structure, complex I is composed of 45 different subunits. This is a component of the flavoprotein-sulfur (FP) fragment of the enzyme.

The protein localises to the mitochondrion inner membrane. In terms of biological role, accessory subunit of the mitochondrial membrane respiratory chain NADH dehydrogenase (Complex I), that is believed not to be involved in catalysis. Complex I functions in the transfer of electrons from NADH to the respiratory chain. The immediate electron acceptor for the enzyme is believed to be ubiquinone. May be the terminally assembled subunit of Complex I. The polypeptide is NADH dehydrogenase [ubiquinone] flavoprotein 3, mitochondrial (NDUFV3) (Homo sapiens (Human)).